Consider the following 330-residue polypeptide: 1,8-cineole synthase (330 aa).

A Mg(2+)-binding site is contributed by Asp81. The short motif at 81–85 (DDHFD) is the DDXXD motif element. Residue Arg174 coordinates substrate. Mg(2+) is bound by residues Asn220 and Ser224. The short motif at 220–228 (NDVLSLEKE) is the NXXXSXXXE motif element. Residue Lys227 coordinates substrate. Glu228 provides a ligand contact to Mg(2+). 314–315 (RY) contributes to the substrate binding site.

Belongs to the terpene synthase family. In terms of assembly, homodimer. The cofactor is Mg(2+).

The catalysed reaction is (2E)-geranyl diphosphate + H2O = 1,8-cineole + diphosphate. The enzyme catalyses neryl diphosphate + H2O = 1,8-cineole + diphosphate. Its function is as follows. In vitro, catalyzes the formation of 1,8-cineole from geranyl diphosphate (GPP). Can also accept neryl diphosphate (NPP) as substrate to produce 1,8-cineole. In Streptomyces clavuligerus, this protein is 1,8-cineole synthase.